Consider the following 322-residue polypeptide: MSSAEQHTCSRPVVLITGPTASGKSALAHALAKAINAEIVSADSRQIYRGMDIGTAKPSMEMLAEVPYHFINEKEIAEEYNAGDFTSDAMARIRSIHEKGHDAIVAGGSTLYIEGLLHGFSQLPKKDADIRRRLQEELNTGGAEKLYARLTTLDPEHARTLDPSKTQRLVRSLEIITITGKTVTGLRAAEHSRLSSVTFIPFGLSLQRNRLYERINTRTDAMMASGLLKEAEQLYERYLSAENRATINALETVGYKELFQYFDGIHSLLRAVELIQQHTRNYAKRQLTFFKNRLNVQWLAAPENLKELHEQKEQLITLYSKT.

18–25 serves as a coordination point for ATP; it reads GPTASGKS. 20 to 25 contributes to the substrate binding site; the sequence is TASGKS. Interaction with substrate tRNA stretches follow at residues 43 to 46 and 167 to 171; these read DSRQ and QRLVR.

The protein belongs to the IPP transferase family. As to quaternary structure, monomer. Mg(2+) is required as a cofactor.

It catalyses the reaction adenosine(37) in tRNA + dimethylallyl diphosphate = N(6)-dimethylallyladenosine(37) in tRNA + diphosphate. Catalyzes the transfer of a dimethylallyl group onto the adenine at position 37 in tRNAs that read codons beginning with uridine, leading to the formation of N6-(dimethylallyl)adenosine (i(6)A). This chain is tRNA dimethylallyltransferase, found in Chlorobium phaeobacteroides (strain BS1).